Here is a 503-residue protein sequence, read N- to C-terminus: Probable cytosol aminopeptidase (503 aa).

Positions 274 and 279 each coordinate Mn(2+). Residue Lys-286 is part of the active site. Positions 297, 356, and 358 each coordinate Mn(2+). Arg-360 is a catalytic residue.

The protein belongs to the peptidase M17 family. Requires Mn(2+) as cofactor.

It localises to the cytoplasm. The catalysed reaction is Release of an N-terminal amino acid, Xaa-|-Yaa-, in which Xaa is preferably Leu, but may be other amino acids including Pro although not Arg or Lys, and Yaa may be Pro. Amino acid amides and methyl esters are also readily hydrolyzed, but rates on arylamides are exceedingly low.. It carries out the reaction Release of an N-terminal amino acid, preferentially leucine, but not glutamic or aspartic acids.. Presumably involved in the processing and regular turnover of intracellular proteins. Catalyzes the removal of unsubstituted N-terminal amino acids from various peptides. This chain is Probable cytosol aminopeptidase, found in Burkholderia ambifaria (strain MC40-6).